Reading from the N-terminus, the 463-residue chain is Eukaryotic translation initiation factor 3 subunit E (463 aa).

One can recognise a PCI domain in the interval 224-407 (FNLGENQGCQ…NMLHITRPHA (184 aa)). The disordered stretch occupies residues 432–463 (QSSVGEPRERGERGERGNKGGRGRPRTQEVAA). Residues 437–449 (EPRERGERGERGN) show a composition bias toward basic and acidic residues.

It belongs to the eIF-3 subunit E family. In terms of assembly, component of the eukaryotic translation initiation factor 3 (eIF-3) complex.

Its subcellular location is the cytoplasm. Component of the eukaryotic translation initiation factor 3 (eIF-3) complex, which is involved in protein synthesis of a specialized repertoire of mRNAs and, together with other initiation factors, stimulates binding of mRNA and methionyl-tRNAi to the 40S ribosome. The eIF-3 complex specifically targets and initiates translation of a subset of mRNAs involved in cell proliferation. The protein is Eukaryotic translation initiation factor 3 subunit E of Cryptococcus neoformans var. neoformans serotype D (strain JEC21 / ATCC MYA-565) (Filobasidiella neoformans).